The sequence spans 474 residues: PRAME family member 2 (474 aa).

One copy of the LRR 1; degenerate repeat lies at 97–124 (RWKLQVLDLRDVDENFWARWPGAWALSC). One copy of the LRR 2; degenerate repeat lies at 179 to 203 (HLCCSKLVNYLTPIKYLRKSLKIIY). The LRR 3; degenerate repeat unit spans residues 204 to 230 (INSIGELEIHNTCWPHLIRKLYCYLKE). The LRR 4; degenerate repeat unit spans residues 231–265 (MKTLCKLVFSRCHHYTSDNELEGWLVTRFTSVFLR). 5 LRR repeats span residues 266-291 (LEHL…IRCL), 292-323 (QNPL…GYLK), 324-342 (HLNL…PLGA), 348-375 (AASL…GLSC), and 376-400 (CSQL…LLRH).

The protein belongs to the PRAME family.

This Homo sapiens (Human) protein is PRAME family member 2.